A 318-amino-acid chain; its full sequence is Transaldolase (318 aa).

The active-site Schiff-base intermediate with substrate is Lys-132.

This sequence belongs to the transaldolase family. Type 1 subfamily. In terms of assembly, homodimer.

The protein resides in the cytoplasm. The catalysed reaction is D-sedoheptulose 7-phosphate + D-glyceraldehyde 3-phosphate = D-erythrose 4-phosphate + beta-D-fructose 6-phosphate. It participates in carbohydrate degradation; pentose phosphate pathway; D-glyceraldehyde 3-phosphate and beta-D-fructose 6-phosphate from D-ribose 5-phosphate and D-xylulose 5-phosphate (non-oxidative stage): step 2/3. Transaldolase is important for the balance of metabolites in the pentose-phosphate pathway. The polypeptide is Transaldolase (Shewanella baltica (strain OS155 / ATCC BAA-1091)).